Reading from the N-terminus, the 319-residue chain is Ribonuclease Z (319 aa).

Zn(2+) contacts are provided by H62, H64, D66, H67, H139, D210, and H268. D66 serves as the catalytic Proton acceptor.

Belongs to the RNase Z family. As to quaternary structure, homodimer. Requires Zn(2+) as cofactor.

It carries out the reaction Endonucleolytic cleavage of RNA, removing extra 3' nucleotides from tRNA precursor, generating 3' termini of tRNAs. A 3'-hydroxy group is left at the tRNA terminus and a 5'-phosphoryl group is left at the trailer molecule.. In terms of biological role, zinc phosphodiesterase, which displays some tRNA 3'-processing endonuclease activity. Probably involved in tRNA maturation, by removing a 3'-trailer from precursor tRNA. The protein is Ribonuclease Z of Nostoc punctiforme (strain ATCC 29133 / PCC 73102).